Reading from the N-terminus, the 337-residue chain is UDP-N-acetylenolpyruvoylglucosamine reductase (337 aa).

The region spanning 17–186 (IEAKAKQFIA…TSVIYKLTKR (170 aa)) is the FAD-binding PCMH-type domain. Residue arginine 162 is part of the active site. Catalysis depends on serine 237, which acts as the Proton donor. Glutamate 333 is a catalytic residue.

It belongs to the MurB family. Requires FAD as cofactor.

It is found in the cytoplasm. The enzyme catalyses UDP-N-acetyl-alpha-D-muramate + NADP(+) = UDP-N-acetyl-3-O-(1-carboxyvinyl)-alpha-D-glucosamine + NADPH + H(+). Its pathway is cell wall biogenesis; peptidoglycan biosynthesis. Functionally, cell wall formation. This chain is UDP-N-acetylenolpyruvoylglucosamine reductase, found in Flavobacterium johnsoniae (strain ATCC 17061 / DSM 2064 / JCM 8514 / BCRC 14874 / CCUG 350202 / NBRC 14942 / NCIMB 11054 / UW101) (Cytophaga johnsonae).